We begin with the raw amino-acid sequence, 182 residues long: Large ribosomal subunit protein uL5 (182 aa).

It belongs to the universal ribosomal protein uL5 family. As to quaternary structure, part of the 50S ribosomal subunit; part of the 5S rRNA/L5/L18/L25 subcomplex. Contacts the 5S rRNA and the P site tRNA. Forms a bridge to the 30S subunit in the 70S ribosome.

Its function is as follows. This is one of the proteins that bind and probably mediate the attachment of the 5S RNA into the large ribosomal subunit, where it forms part of the central protuberance. In the 70S ribosome it contacts protein S13 of the 30S subunit (bridge B1b), connecting the 2 subunits; this bridge is implicated in subunit movement. Contacts the P site tRNA; the 5S rRNA and some of its associated proteins might help stabilize positioning of ribosome-bound tRNAs. In Leptospira interrogans serogroup Icterohaemorrhagiae serovar copenhageni (strain Fiocruz L1-130), this protein is Large ribosomal subunit protein uL5.